The following is a 253-amino-acid chain: Ubiquinone/menaquinone biosynthesis C-methyltransferase UbiE (253 aa).

Residues Thr-76, Asp-97, and 125–126 each bind S-adenosyl-L-methionine; that span reads NA.

The protein belongs to the class I-like SAM-binding methyltransferase superfamily. MenG/UbiE family.

It catalyses the reaction a 2-demethylmenaquinol + S-adenosyl-L-methionine = a menaquinol + S-adenosyl-L-homocysteine + H(+). It carries out the reaction a 2-methoxy-6-(all-trans-polyprenyl)benzene-1,4-diol + S-adenosyl-L-methionine = a 5-methoxy-2-methyl-3-(all-trans-polyprenyl)benzene-1,4-diol + S-adenosyl-L-homocysteine + H(+). The protein operates within quinol/quinone metabolism; menaquinone biosynthesis; menaquinol from 1,4-dihydroxy-2-naphthoate: step 2/2. It participates in cofactor biosynthesis; ubiquinone biosynthesis. In terms of biological role, methyltransferase required for the conversion of demethylmenaquinol (DMKH2) to menaquinol (MKH2) and the conversion of 2-polyprenyl-6-methoxy-1,4-benzoquinol (DDMQH2) to 2-polyprenyl-3-methyl-6-methoxy-1,4-benzoquinol (DMQH2). The polypeptide is Ubiquinone/menaquinone biosynthesis C-methyltransferase UbiE (Rhodopseudomonas palustris (strain HaA2)).